Consider the following 547-residue polypeptide: NXPE family member 1 (547 aa).

A signal peptide spans 1–21; that stretch reads MSSNTMLQKTLLILISFSVVT. Asparagine 39 and asparagine 211 each carry an N-linked (GlcNAc...) asparagine glycan.

The protein belongs to the NXPE family.

It is found in the secreted. This is NXPE family member 1 (NXPE1) from Homo sapiens (Human).